Consider the following 427-residue polypeptide: Serine--tRNA ligase (427 aa).

230-232 (TAE) provides a ligand contact to L-serine. 261–263 (RAE) serves as a coordination point for ATP. Residue Glu-284 coordinates L-serine. ATP is bound at residue 348–351 (EISS). Ser-384 provides a ligand contact to L-serine.

It belongs to the class-II aminoacyl-tRNA synthetase family. Type-1 seryl-tRNA synthetase subfamily. Homodimer. The tRNA molecule binds across the dimer.

It is found in the cytoplasm. It carries out the reaction tRNA(Ser) + L-serine + ATP = L-seryl-tRNA(Ser) + AMP + diphosphate + H(+). The catalysed reaction is tRNA(Sec) + L-serine + ATP = L-seryl-tRNA(Sec) + AMP + diphosphate + H(+). It functions in the pathway aminoacyl-tRNA biosynthesis; selenocysteinyl-tRNA(Sec) biosynthesis; L-seryl-tRNA(Sec) from L-serine and tRNA(Sec): step 1/1. Catalyzes the attachment of serine to tRNA(Ser). Is also able to aminoacylate tRNA(Sec) with serine, to form the misacylated tRNA L-seryl-tRNA(Sec), which will be further converted into selenocysteinyl-tRNA(Sec). The protein is Serine--tRNA ligase of Syntrophomonas wolfei subsp. wolfei (strain DSM 2245B / Goettingen).